Reading from the N-terminus, the 786-residue chain is Cas scaffolding protein family member 4 (786 aa).

Positions 11 to 73 (PKALLARALY…PANRLQILTE (63 aa)) constitute an SH3 domain. A phosphoserine mark is found at Ser-200 and Ser-249. The segment at 262–295 (SFAEESRPHALPSSSSTFYNPPSGRSRSLTPQLN) is disordered. Residues 273-295 (PSSSSTFYNPPSGRSRSLTPQLN) show a composition bias toward polar residues. Ser-305 is modified (phosphoserine). Disordered stretches follow at residues 361-429 (QAGK…SEES) and 612-670 (IQPP…ERKP). Residues 364 to 373 (KELEKAKEVS) show a composition bias toward basic and acidic residues. A compositionally biased stretch (polar residues) spans 374–391 (ENSAGHNSSWFSRRTTSP). Phosphoserine is present on residues Ser-376 and Ser-390. Residues 399 to 427 (SGSSSDSRASIVSSCSTTSTDDSSSSSSE) are compositionally biased toward low complexity. Positions 630 to 642 (KQREDEHSSELLK) are enriched in basic and acidic residues.

The protein belongs to the CAS family. In terms of assembly, interacts (via SH3 domain) with PTK2/FAK1 (via C-terminus). In terms of processing, phosphorylated on tyrosines by SRC. As to expression, expressed abundantly in lung and spleen. Also highly expressed in ovarian and leukemia cell lines.

The protein localises to the cytoplasm. It localises to the cytoskeleton. The protein resides in the cell junction. Its subcellular location is the focal adhesion. In terms of biological role, docking protein that plays a role in tyrosine kinase-based signaling related to cell adhesion and cell spreading. Regulates PTK2/FAK1 activity, focal adhesion integrity, and cell spreading. This chain is Cas scaffolding protein family member 4 (CASS4), found in Homo sapiens (Human).